The chain runs to 351 residues: Histidinol-phosphate aminotransferase (351 aa).

The segment at 1-26 is disordered; sequence MRFRAELEPLSPYNPPRASQEAAAER. The residue at position 223 (K223) is an N6-(pyridoxal phosphate)lysine.

The protein belongs to the class-II pyridoxal-phosphate-dependent aminotransferase family. Histidinol-phosphate aminotransferase subfamily. As to quaternary structure, homodimer. Pyridoxal 5'-phosphate is required as a cofactor.

It carries out the reaction L-histidinol phosphate + 2-oxoglutarate = 3-(imidazol-4-yl)-2-oxopropyl phosphate + L-glutamate. The protein operates within amino-acid biosynthesis; L-histidine biosynthesis; L-histidine from 5-phospho-alpha-D-ribose 1-diphosphate: step 7/9. In Rubrobacter xylanophilus (strain DSM 9941 / JCM 11954 / NBRC 16129 / PRD-1), this protein is Histidinol-phosphate aminotransferase.